Here is a 1063-residue protein sequence, read N- to C-terminus: Unconventional myosin-Ic (1063 aa).

M1 bears the N-acetylmethionine mark. The Myosin motor domain occupies G47 to E731. ATP is bound by residues N88, Y96, S139 to E148, and N192 to S196. Residue K383 is modified to N6-methyllysine. S408 is modified (phosphoserine). K486 is modified (N6-acetyllysine). At S536 the chain carries Phosphoserine. Residues L608–D630 form an actin-binding region. 2 consecutive IQ domains span residues R734–V757 and K758–T786. S864 and S1041 each carry phosphoserine. In terms of domain architecture, TH1 spans K885 to R1059.

It belongs to the TRAFAC class myosin-kinesin ATPase superfamily. Myosin family. As to quaternary structure, interacts (via its IQ motifs) with CABP1 and CIB1; the interaction with CABP1 and CIB1 is calcium-dependent. Interacts (via tail domain) with PLEKHB1 (via PH domain); the interaction is not affected by the presence or absence of calcium and CALM. Interacts with POLR1A. Interacts with POLR2A. Component of the B-WICH complex, at least composed of SMARCA5/SNF2H, BAZ1B/WSTF, SF3B1, DEK, MYO1C, ERCC6, MYBBP1A and DDX21. Interacts (via its IQ motifs) with CALM; this precludes interaction with YWHAB. Interacts with YWHAB; this precludes interaction with CALM. Interacts with RPS6. Interacts with actin. Interacts with LLPH. Interacts with GLUT4. Interacts (via its IQ motifs) with SH3BGRL3; the interaction is dependent on calcium and takes place at membrane ruffles. Isoform 2 contains a N-acetylmethionine at position 1. In terms of tissue distribution, widely expressed.

The protein resides in the cytoplasm. The protein localises to the nucleus. Its subcellular location is the cell cortex. It is found in the cell projection. It localises to the ruffle membrane. The protein resides in the cytoplasmic vesicle. The protein localises to the stereocilium membrane. Its subcellular location is the nucleolus. It is found in the nucleoplasm. Functionally, myosins are actin-based motor molecules with ATPase activity. Unconventional myosins serve in intracellular movements. Their highly divergent tails are presumed to bind to membranous compartments, which would be moved relative to actin filaments. Involved in glucose transporter recycling in response to insulin by regulating movement of intracellular GLUT4-containing vesicles to the plasma membrane. Component of the hair cell's (the sensory cells of the inner ear) adaptation-motor complex. Acts as a mediator of adaptation of mechanoelectrical transduction in stereocilia of vestibular hair cells. Binds phosphoinositides and links the actin cytoskeleton to cellular membranes. Isoform 3 is involved in regulation of transcription. Associated with transcriptional active ribosomal genes. Appears to cooperate with the WICH chromatin-remodeling complex to facilitate transcription. Necessary for the formation of the first phosphodiester bond during transcription initiation. This chain is Unconventional myosin-Ic (MYO1C), found in Bos taurus (Bovine).